The chain runs to 238 residues: 7-cyano-7-deazaguanine synthase (238 aa).

Residue 14-24 (FSGGQDSTTCL) participates in ATP binding. The Zn(2+) site is built by C195, C204, C207, and C210.

It belongs to the QueC family. Requires Zn(2+) as cofactor.

It carries out the reaction 7-carboxy-7-deazaguanine + NH4(+) + ATP = 7-cyano-7-deazaguanine + ADP + phosphate + H2O + H(+). It functions in the pathway purine metabolism; 7-cyano-7-deazaguanine biosynthesis. Catalyzes the ATP-dependent conversion of 7-carboxy-7-deazaguanine (CDG) to 7-cyano-7-deazaguanine (preQ(0)). The chain is 7-cyano-7-deazaguanine synthase from Baumannia cicadellinicola subsp. Homalodisca coagulata.